Here is a 308-residue protein sequence, read N- to C-terminus: GTPase Era (308 aa).

The Era-type G domain maps to 14-181 (RCGFVALIGA…RSTLAEMVPP (168 aa)). The interval 22–29 (GAPNVGKS) is G1. A GTP-binding site is contributed by 22–29 (GAPNVGKS). The interval 48 to 52 (QTTRA) is G2. Positions 69 to 72 (DTPG) are G3. GTP contacts are provided by residues 69–73 (DTPGI) and 131–134 (NKVD). The interval 131–134 (NKVD) is G4. The interval 160–162 (IAA) is G5. In terms of domain architecture, KH type-2 spans 212–289 (LHQELPYQST…HLFLFVKVRE (78 aa)).

This sequence belongs to the TRAFAC class TrmE-Era-EngA-EngB-Septin-like GTPase superfamily. Era GTPase family. In terms of assembly, monomer.

Its subcellular location is the cytoplasm. The protein resides in the cell inner membrane. In terms of biological role, an essential GTPase that binds both GDP and GTP, with rapid nucleotide exchange. Plays a role in 16S rRNA processing and 30S ribosomal subunit biogenesis and possibly also in cell cycle regulation and energy metabolism. This Bradyrhizobium diazoefficiens (strain JCM 10833 / BCRC 13528 / IAM 13628 / NBRC 14792 / USDA 110) protein is GTPase Era.